Reading from the N-terminus, the 253-residue chain is Phycoerythrobilin:ferredoxin oxidoreductase (253 aa).

Belongs to the HY2 family.

It catalyses the reaction (3Z)-phycoerythrobilin + oxidized 2[4Fe-4S]-[ferredoxin] = 15,16-dihydrobiliverdin + reduced 2[4Fe-4S]-[ferredoxin] + 2 H(+). Its function is as follows. Catalyzes the two-electron reduction of the C2 and C3(1) diene system of 15,16-dihydrobiliverdin. This chain is Phycoerythrobilin:ferredoxin oxidoreductase, found in Prochlorococcus marinus (strain MIT 9301).